Here is a 732-residue protein sequence, read N- to C-terminus: Polyribonucleotide nucleotidyltransferase (732 aa).

Mg(2+) is bound by residues Asp503 and Asp509. Positions 570-629 (PRLTAIQVPVESIGLIIGKGGETIRSITEETGAEINIEDDGTVTIACSSNEGTKGAVEII) constitute a KH domain. Residues 639-713 (GTVYIGKVRD…GKTRFALSIK (75 aa)) enclose the S1 motif domain.

The protein belongs to the polyribonucleotide nucleotidyltransferase family. The cofactor is Mg(2+).

The protein resides in the cytoplasm. It catalyses the reaction RNA(n+1) + phosphate = RNA(n) + a ribonucleoside 5'-diphosphate. In terms of biological role, involved in mRNA degradation. Catalyzes the phosphorolysis of single-stranded polyribonucleotides processively in the 3'- to 5'-direction. The sequence is that of Polyribonucleotide nucleotidyltransferase from Chlorobium phaeovibrioides (strain DSM 265 / 1930) (Prosthecochloris vibrioformis (strain DSM 265)).